Consider the following 346-residue polypeptide: Histone PARylation factor 1 (346 aa).

Position 1 is an N-acetylmethionine (methionine 1). The interval 1 to 23 is disordered; it reads MVGGGGKRRPGGEGPQCEKTTDV. At lysine 19 the chain carries N6-acetyllysine. ADP-ribosylserine is present on serine 97. Lysine 186 and lysine 233 each carry N6-acetyllysine. Aspartate 235 is modified (polyADP-ribosyl aspartic acid). ADP-ribosyltyrosine is present on tyrosine 238. Glutamate 240 carries the post-translational modification PolyADP-ribosyl glutamic acid. An interaction with PARP1 region spans residues 242–346; the sequence is PETDADLKRI…SQENIDQLAA (105 aa). Catalysis depends on glutamate 284, which acts as the Proton donor.

This sequence belongs to the HPF1 family. In terms of assembly, interacts with PARP1 (via the PARP catalytic domain). Interacts with PARP2 (via the PARP catalytic domain). Interacts with core nucleosomes in a PARP1- and PARP2-dependent manner.

Its subcellular location is the chromosome. It localises to the nucleus. Its function is as follows. Cofactor for serine ADP-ribosylation that confers serine specificity on PARP1 and PARP2 and plays a key role in DNA damage response. Initiates the repair of double-strand DNA breaks: recruited to DNA damage sites by PARP1 and PARP2 and switches the amino acid specificity of PARP1 and PARP2 from aspartate or glutamate to serine residues, licensing serine ADP-ribosylation of target proteins. Serine ADP-ribosylation of target proteins, such as histones, promotes decompaction of chromatin and the recruitment of repair factors leading to the reparation of DNA strand breaks. Serine ADP-ribosylation of proteins constitutes the primary form of ADP-ribosylation of proteins in response to DNA damage. HPF1 acts by completing the active site of PARP1 and PARP2: forms a composite active site composed of residues from HPF1 and PARP1 or PARP2. While HPF1 promotes the initiation of serine ADP-ribosylation, it restricts the polymerase activity of PARP1 and PARP2 in order to limit the length of poly-ADP-ribose chains. HPF1 also promotes tyrosine ADP-ribosylation, probably by conferring tyrosine specificity on PARP1. The chain is Histone PARylation factor 1 from Homo sapiens (Human).